The primary structure comprises 76 residues: Conotoxin Cal5a L2 (76 aa).

The signal sequence occupies residues 1–22; it reads MRFYIGLMAALMLTSILRTDSA. A propeptide spanning residues 23-42 is cleaved from the precursor; that stretch reads SVGQTGTKSELALIERVIRQ. Position 50 is a 4-hydroxyproline (Pro50). 4-hydroxyproline; partial occurs at positions 58, 62, and 64.

The protein belongs to the conotoxin T superfamily. Post-translationally, contains 2 disulfide bonds that can be either 'C1-C3, C2-C4' or 'C1-C4, C2-C3', since these disulfide connectivities have been observed for conotoxins with cysteine framework V (for examples, see AC P0DQQ7 and AC P81755). In terms of tissue distribution, expressed by the venom duct.

The protein resides in the secreted. Its function is as follows. Probable neurotoxin with unknown target. Possibly targets ion channels. The chain is Conotoxin Cal5a L2 from Californiconus californicus (California cone).